We begin with the raw amino-acid sequence, 825 residues long: Cytosolic phospholipase A2 delta (825 aa).

The 120-residue stretch at 14–133 (SPERLHGHPY…LPGQLLQKTF (120 aa)) folds into the C2 domain. Ca(2+)-binding residues include Asp-47, Asp-53, Asp-103, Asp-105, and Asp-111. One can recognise a PLA2c domain in the interval 281-825 (DCCPKELSVR…SETRPLGVKT (545 aa)). 339 to 340 (GG) contacts substrate. Residue Ser-370 is the Nucleophile of the active site. The active-site Proton acceptor is the Asp-654.

It depends on Ca(2+) as a cofactor. Weakly or not expressed in most tissues. Detected in placenta of 17.5 dpc embryos.

The protein resides in the cytoplasm. It is found in the cytosol. The protein localises to the membrane. The catalysed reaction is a 1,2-diacyl-sn-glycero-3-phosphocholine + H2O = a 1-acyl-sn-glycero-3-phosphocholine + a fatty acid + H(+). The enzyme catalyses 1-hexadecanoyl-2-(5Z,8Z,11Z,14Z-eicosatetraenoyl)-sn-glycero-3-phosphocholine + H2O = 1-hexadecanoyl-sn-glycero-3-phosphocholine + (5Z,8Z,11Z,14Z)-eicosatetraenoate + H(+). It catalyses the reaction 1-hexadecanoyl-2-(9Z,12Z-octadecadienoyl)-sn-glycero-3-phosphocholine + H2O = (9Z,12Z)-octadecadienoate + 1-hexadecanoyl-sn-glycero-3-phosphocholine + H(+). It carries out the reaction 1-hexadecanoyl-2-(9Z-octadecenoyl)-sn-glycero-3-phosphocholine + H2O = 1-hexadecanoyl-sn-glycero-3-phosphocholine + (9Z)-octadecenoate + H(+). The catalysed reaction is 1-hexadecanoyl-2-(5Z,8Z,11Z,14Z-eicosatetraenoyl)-sn-glycero-3-phosphoethanolamine + H2O = 1-hexadecanoyl-sn-glycero-3-phosphoethanolamine + (5Z,8Z,11Z,14Z)-eicosatetraenoate + H(+). The enzyme catalyses 1-hexadecanoyl-2-(9Z,12Z-octadecadienoyl)-sn-glycero-3-phosphoethanolamine + H2O = 1-hexadecanoyl-sn-glycero-3-phosphoethanolamine + (9Z,12Z)-octadecadienoate + H(+). It catalyses the reaction 1-hexadecanoyl-sn-glycero-3-phosphocholine + H2O = sn-glycerol 3-phosphocholine + hexadecanoate + H(+). It participates in lipid metabolism; fatty acid metabolism. Its activity is regulated as follows. Stimulated by cytosolic Ca(2+). Functionally, calcium-dependent phospholipase A2 that selectively hydrolyzes glycerophospholipids in the sn-2 position. Compared to its human ortholog, may have no preference for the fatty acid found at the sn-2 position. The protein is Cytosolic phospholipase A2 delta of Mus musculus (Mouse).